Consider the following 1223-residue polypeptide: DNA-directed RNA polymerase subunit beta' (1223 aa).

Cys-60, Cys-62, Cys-75, and Cys-78 together coordinate Zn(2+). Mg(2+)-binding residues include Asp-449, Asp-451, and Asp-453. Residues Cys-818, Cys-892, Cys-899, and Cys-902 each coordinate Zn(2+).

The protein belongs to the RNA polymerase beta' chain family. The RNAP catalytic core consists of 2 alpha, 1 beta, 1 beta' and 1 omega subunit. When a sigma factor is associated with the core the holoenzyme is formed, which can initiate transcription. Requires Mg(2+) as cofactor. Zn(2+) is required as a cofactor.

The catalysed reaction is RNA(n) + a ribonucleoside 5'-triphosphate = RNA(n+1) + diphosphate. Functionally, DNA-dependent RNA polymerase catalyzes the transcription of DNA into RNA using the four ribonucleoside triphosphates as substrates. The chain is DNA-directed RNA polymerase subunit beta' from Lactobacillus gasseri (strain ATCC 33323 / DSM 20243 / BCRC 14619 / CIP 102991 / JCM 1131 / KCTC 3163 / NCIMB 11718 / NCTC 13722 / AM63).